Reading from the N-terminus, the 1108-residue chain is Alpha-mannosidase 2 (1108 aa).

At 1–9 (MLRIRRRFA) the chain is on the cytoplasmic side. Residues 10 to 30 (LVICSGCLLVFLSLYIILNFA) traverse the membrane as a helical; Signal-anchor for type II membrane protein segment. Over 31–1108 (APAATQIKPN…TAAYVSSHSS (1078 aa)) the chain is Lumenal. Residues 70 to 92 (AETSNRDDPIRPPLKVARSPRPG) are disordered. Zn(2+) is bound by residues His-153, Asp-155, Asp-267, and His-534. Residue Asp-267 is the Nucleophile of the active site.

The protein belongs to the glycosyl hydrolase 38 family. In terms of assembly, homodimer; disulfide-linked. Zn(2+) is required as a cofactor.

It localises to the golgi apparatus membrane. It catalyses the reaction N(4)-{beta-D-GlcNAc-(1-&gt;2)-alpha-D-Man-(1-&gt;3)-[alpha-D-Man-(1-&gt;3)-[alpha-D-Man-(1-&gt;6)]-alpha-D-Man-(1-&gt;6)]-beta-D-Man-(1-&gt;4)-beta-D-GlcNAc-(1-&gt;4)-beta-D-GlcNAc}-L-asparaginyl-[protein] + 2 H2O = 2 alpha-D-mannopyranose + an N(4)-{beta-D-GlcNAc-(1-&gt;2)-alpha-D-Man-(1-&gt;3)-[alpha-D-Man-(1-&gt;6)]-beta-D-Man-(1-&gt;4)-beta-D-GlcNAc-(1-&gt;4)-beta-D-GlcNAc}-L-asparaginyl-[protein]. The protein operates within protein modification; protein glycosylation. Its function is as follows. Catalyzes the first committed step in the biosynthesis of complex N-glycans. It controls conversion of high mannose to complex N-glycans; the final hydrolytic step in the N-glycan maturation pathway. The sequence is that of Alpha-mannosidase 2 from Drosophila melanogaster (Fruit fly).